Here is a 249-residue protein sequence, read N- to C-terminus: MKSLKKLKELETSDVFNILHVRTILKVIKIDKCISLARHPLVNITVGDDGIWFHLEDGTMINGLEYKTICEKELGFQGFIGIIILDSEDTLQELRLNPFQFKRRLIHMKVDTPEEFMLCGLVFALENLPLKQSTLHKLIAKLVLFPALSPITKILFNTCDTLVCTLRHIFFNEHASEILHKVPLMIRLYNEMKNTHIEVLELYFNTKRSHNFINLSLESRQLQDSSLQVIQLATQFAQTFYSKNGDTSS.

This sequence belongs to the herpesviridae cytoplasmic envelopment protein 1 family.

The protein resides in the virion. It is found in the virion tegument. It localises to the host cytoplasm. Its subcellular location is the host Golgi apparatus. Functionally, plays a critical role in cytoplasmic virus egress. Participates in the final step of tegumentation and envelope acquisition within the host cytoplasm. The chain is Cytoplasmic envelopment protein 1 (U75) from Human herpesvirus 6A (strain Uganda-1102) (HHV-6 variant A).